The sequence spans 444 residues: Protein-serine O-palmitoleoyltransferase porcupine (444 aa).

10 helical membrane-spanning segments follow: residues 29–49 (NGTL…FLVW), 81–101 (VMIF…KLNG), 128–150 (FLTL…FAIV), 163–183 (TLYL…YVTF), 201–221 (LGVF…AIIS), 249–269 (YFIC…IVVA), 304–324 (FFQS…LLHA), 326–346 (DYQM…ETVF), 383–403 (VLII…FTGM), and 420–440 (WTIW…FLAL). The active site involves H323.

This sequence belongs to the membrane-bound acyltransferase family. Porcupine subfamily.

It localises to the membrane. The catalysed reaction is [Wnt protein]-L-serine + (9Z)-hexadecenoyl-CoA = [Wnt protein]-O-(9Z)-hexadecenoyl-L-serine + CoA. Key regulator of the Wnt signaling pathway that mediates lipid modification of Wnt proteins. Acts as a protein-serine O-palmitoleoyltransferase that catalyzes the attachment of palmitoleate, a 16-carbon monounsaturated fatty acid (C16:1(9Z)), to Wnt proteins. Serine palmitoleoylation of WNT proteins is required for efficient binding to frizzled receptors. Has a role in cell specification, specifically in blastomere signaling. Involved in cytosketetal polarity. Required for the orientation of mitotic spindle axis. The polypeptide is Protein-serine O-palmitoleoyltransferase porcupine (Caenorhabditis briggsae).